A 344-amino-acid chain; its full sequence is Golgi-associated RAB2 interactor protein 1B (344 aa).

Belongs to the GARIN family.

It localises to the golgi apparatus. Functionally, RAB2B effector protein required for accurate acrosome formation and normal male fertility. In complex with RAB2A/RAB2B, seems to suppress excessive vesicle trafficking during acrosome formation. This chain is Golgi-associated RAB2 interactor protein 1B (Garin1b), found in Rattus norvegicus (Rat).